Consider the following 350-residue polypeptide: Probable poly-beta-1,6-N-acetyl-D-glucosamine export protein (350 aa).

A run of 10 helical transmembrane segments spans residues 7-29 (ELVYLRAIICAIIIITHLLTQIT), 44-66 (FYIRNIVIFGTPCFIILSQLLTT), 79-101 (TRVKYILIPYILMGLFYSYSESL), 116-138 (LLGQWYGYFIVVIMQFFILSYII), 145-167 (LFNSKILLLLSFILQQSFLYYFT), 187-204 (IIFGWIFYFFLGAYMGYN), 211-233 (FLERYLVIMIVLAVATYFVFIAL), 243-262 (SFSYSLTPYNSIMFIVILGI), 269-291 (ILFNTIQMISAFSFFIYLLHPII), and 306-328 (TMVFLAISLLFILGLCIGVGMIL).

It belongs to the acyltransferase 3 family.

The protein localises to the cell membrane. Presumably involved in the export of the biofilm adhesin polysaccharide poly-beta-1,6-N-acetyl-D-glucosamine (PNAG, also referred to as PIA) across the cell membrane. This chain is Probable poly-beta-1,6-N-acetyl-D-glucosamine export protein (icaC), found in Staphylococcus aureus (strain Mu50 / ATCC 700699).